Reading from the N-terminus, the 76-residue chain is Exodeoxyribonuclease 7 small subunit (76 aa).

This sequence belongs to the XseB family. Heterooligomer composed of large and small subunits.

Its subcellular location is the cytoplasm. The catalysed reaction is Exonucleolytic cleavage in either 5'- to 3'- or 3'- to 5'-direction to yield nucleoside 5'-phosphates.. In terms of biological role, bidirectionally degrades single-stranded DNA into large acid-insoluble oligonucleotides, which are then degraded further into small acid-soluble oligonucleotides. This chain is Exodeoxyribonuclease 7 small subunit, found in Arthrobacter sp. (strain FB24).